We begin with the raw amino-acid sequence, 272 residues long: Bifunctional protein FolD (272 aa).

NADP(+) contacts are provided by residues 155–157 (GRS), Ser-182, and Ile-223.

The protein belongs to the tetrahydrofolate dehydrogenase/cyclohydrolase family. Homodimer.

It catalyses the reaction (6R)-5,10-methylene-5,6,7,8-tetrahydrofolate + NADP(+) = (6R)-5,10-methenyltetrahydrofolate + NADPH. The enzyme catalyses (6R)-5,10-methenyltetrahydrofolate + H2O = (6R)-10-formyltetrahydrofolate + H(+). The protein operates within one-carbon metabolism; tetrahydrofolate interconversion. Functionally, catalyzes the oxidation of 5,10-methylenetetrahydrofolate to 5,10-methenyltetrahydrofolate and then the hydrolysis of 5,10-methenyltetrahydrofolate to 10-formyltetrahydrofolate. In Fervidobacterium nodosum (strain ATCC 35602 / DSM 5306 / Rt17-B1), this protein is Bifunctional protein FolD.